The sequence spans 546 residues: Cation/calcium exchanger 5 (546 aa).

Helical transmembrane passes span 13 to 33, 88 to 108, 134 to 154, 163 to 183, 194 to 214, 218 to 238, 323 to 343, 356 to 376, 388 to 408, 423 to 445, 455 to 475, 492 to 512, and 522 to 542; these read ALCLTLISILIFFFLTTTTIP, NLFFSIPILSLLILLHFYILI, AVTLLALGNGAPDVFASVAAL, FGAILSAGTFVSAFVVGFVAI, SFVRDVLFYLIAALFLFYVYL, IFVWQAIGFVGFYIFFVGFVF, SANIVFCPFALLYTCNSFVQL, LPLWLVVLFMTSSLAFLHFTV, VIVVAFIMSVFWISTIAGELL, ALLGLTVLAWGNSVGDLVADVAV, MAGCFAGPMFNMLVGLGSALV, VGIVIAFVFLLLSLMGSLLVI, and FWGICLVGLYVAFTFVSLIIA.

Belongs to the Ca(2+):cation antiporter (CaCA) (TC 2.A.19) family. Cation/calcium exchanger (CCX) subfamily.

The protein resides in the cell membrane. Its function is as follows. Membrane-localized H(+)-dependent K(+) and Na(+) transporter. The polypeptide is Cation/calcium exchanger 5 (CCX5) (Arabidopsis thaliana (Mouse-ear cress)).